A 617-amino-acid chain; its full sequence is Dihydroxy-acid dehydratase (617 aa).

Asp-81 serves as a coordination point for Mg(2+). Cys-122 is a binding site for [2Fe-2S] cluster. Asp-123 and Lys-124 together coordinate Mg(2+). Lys-124 carries the N6-carboxylysine modification. Position 195 (Cys-195) interacts with [2Fe-2S] cluster. Position 492 (Glu-492) interacts with Mg(2+). The Proton acceptor role is filled by Ser-518.

The protein belongs to the IlvD/Edd family. Homodimer. The cofactor is [2Fe-2S] cluster. Mg(2+) is required as a cofactor.

The enzyme catalyses (2R)-2,3-dihydroxy-3-methylbutanoate = 3-methyl-2-oxobutanoate + H2O. It catalyses the reaction (2R,3R)-2,3-dihydroxy-3-methylpentanoate = (S)-3-methyl-2-oxopentanoate + H2O. It participates in amino-acid biosynthesis; L-isoleucine biosynthesis; L-isoleucine from 2-oxobutanoate: step 3/4. Its pathway is amino-acid biosynthesis; L-valine biosynthesis; L-valine from pyruvate: step 3/4. In terms of biological role, functions in the biosynthesis of branched-chain amino acids. Catalyzes the dehydration of (2R,3R)-2,3-dihydroxy-3-methylpentanoate (2,3-dihydroxy-3-methylvalerate) into 2-oxo-3-methylpentanoate (2-oxo-3-methylvalerate) and of (2R)-2,3-dihydroxy-3-methylbutanoate (2,3-dihydroxyisovalerate) into 2-oxo-3-methylbutanoate (2-oxoisovalerate), the penultimate precursor to L-isoleucine and L-valine, respectively. The polypeptide is Dihydroxy-acid dehydratase (Xanthobacter autotrophicus (strain ATCC BAA-1158 / Py2)).